The following is a 146-amino-acid chain: Protein STIG1 (146 aa).

Positions 1-23 (MAFINLLILIILTLSSTPITTMS) are cleaved as a signal peptide. N-linked (GlcNAc...) asparagine glycosylation is found at Asn31, Asn61, and Asn84.

Belongs to the STIG1 family. Glycosylated. As to expression, expressed exclusively in the stigmatic secretory zone.

It localises to the secreted. Functionally, involved in the temporal regulation of the exudate secretion onto the stigma. This chain is Protein STIG1, found in Nicotiana tabacum (Common tobacco).